The chain runs to 226 residues: Ribonuclease 3 (226 aa).

The 123-residue stretch at Ile-6–Asp-128 folds into the RNase III domain. Mg(2+) is bound at residue Glu-41. The active site involves Asp-45. Asp-114 and Glu-117 together coordinate Mg(2+). The active site involves Glu-117. In terms of domain architecture, DRBM spans Asp-155–Leu-225.

Belongs to the ribonuclease III family. As to quaternary structure, homodimer. Requires Mg(2+) as cofactor.

Its subcellular location is the cytoplasm. The catalysed reaction is Endonucleolytic cleavage to 5'-phosphomonoester.. Digests double-stranded RNA. Involved in the processing of primary rRNA transcript to yield the immediate precursors to the large and small rRNAs (23S and 16S). Processes some mRNAs, and tRNAs when they are encoded in the rRNA operon. Processes pre-crRNA and tracrRNA of type II CRISPR loci if present in the organism. In Photorhabdus laumondii subsp. laumondii (strain DSM 15139 / CIP 105565 / TT01) (Photorhabdus luminescens subsp. laumondii), this protein is Ribonuclease 3.